The following is a 496-amino-acid chain: DNA-dependent metalloprotease SPRTN (496 aa).

An N-acetylmethionine modification is found at Met-1. One can recognise a SprT-like domain in the interval 45 to 212; sequence LQALFLQFND…KTCGGTYIKI (168 aa). Residue His-111 participates in Zn(2+) binding. Residue Glu-112 is part of the active site. Residues His-115 and His-130 each contribute to the Zn(2+) site. Lys-230 carries the N6-acetyllysine modification. Positions 253-261 match the SHP-box motif; sequence FSGKGYVLG. The residue at position 268 (Ser-268) is a Phosphoserine. Residue Lys-303 forms a Glycyl lysine isopeptide (Lys-Gly) (interchain with G-Cter in SUMO2) linkage. A PIP-box motif is present at residues 326–333; that stretch reads QSVLSSYF. Lys-342 is covalently cross-linked (Glycyl lysine isopeptide (Lys-Gly) (interchain with G-Cter in SUMO2); alternate). Lys-342 is covalently cross-linked (Glycyl lysine isopeptide (Lys-Gly) (interchain with G-Cter in ubiquitin); alternate). A disordered region spans residues 346–459; the sequence is NVNGSPVKSG…STPRSSGGQR (114 aa). Residue Lys-361 forms a Glycyl lysine isopeptide (Lys-Gly) (interchain with G-Cter in SUMO2) linkage. The span at 382–403 shows a compositional bias: low complexity; that stretch reads SSKVTAPASATVTSAAGTSAAI. Ser-383 is subject to Phosphoserine. The short motif at 412–423 is the Nuclear localization signal element; the sequence is DQFLNKRPRLED. Polar residues-rich tracts occupy residues 426 to 437 and 445 to 457; these read ALNNIKEQTQSG and RPTA…SSGG. Lys-431 is covalently cross-linked (Glycyl lysine isopeptide (Lys-Gly) (interchain with G-Cter in SUMO2)). The UBZ4-type zinc finger occupies 461-488; sequence LVNCPVCQGVVLESQINEHLDRCLEGSK. Zn(2+)-binding residues include Cys-464, Cys-467, His-479, and Cys-483.

It belongs to the Spartan family. As to quaternary structure, homodimer. Interacts (VIA PIP-box) with PCNA (when ubiquitinated). Interacts (via its SHP-box) with VCP/p97. Interacts with RAD18. Interacts with KCTD13 and POLD3. Zn(2+) is required as a cofactor. Autocatalytically cleaved in response to double-stranded DNA-binding: autocatalytic cleavage takes place in trans and leads to inactivation. Post-translationally, monoubiquitinated; monoubiquitination promotes exclusion from chromatin. Deubiquitinated by VCPIP1: deubiquitination is required for subsequent acetylation and recruitment to chromatin and DNA damage sites. In terms of processing, acetylated following deubiquitination by VCPIP1, leading to recruitment to chromatin and DNA damage sites. Phosphorylation by CHEK1 promotes recruitment to chromatin.

It localises to the nucleus. The protein resides in the chromosome. With respect to regulation, DNA-binding activates the protease activity: single-stranded DNA-binding specifically activates ability to cleave covalent DNA-protein cross-links (DPCs). In contrast, double-stranded DNA-binding specifically activates autocatalytic cleavage, and subsequent inactivation. Its function is as follows. DNA-dependent metalloendopeptidase that mediates the proteolytic cleavage of covalent DNA-protein cross-links (DPCs) during DNA synthesis, thereby playing a key role in maintaining genomic integrity. DPCs are highly toxic DNA lesions that interfere with essential chromatin transactions, such as replication and transcription, and which are induced by reactive agents, such as UV light or formaldehyde. Associates with the DNA replication machinery and specifically removes DPCs during DNA synthesis. Catalyzes proteolytic cleavage of the HMCES DNA-protein cross-link following unfolding by the BRIP1/FANCJ helicase. Acts as a pleiotropic protease for DNA-binding proteins cross-linked with DNA, such as TOP1, TOP2A, histones H3 and H4. Mediates degradation of DPCs that are not ubiquitinated, while it is not able to degrade ubiquitinated DPCs. SPRTN activation requires polymerase collision with DPCs followed by helicase bypass of DPCs. Involved in recruitment of VCP/p97 to sites of DNA damage. Also acts as an activator of CHEK1 during normal DNA replication by mediating proteolytic cleavage of CHEK1, thereby promoting CHEK1 removal from chromatin and subsequent activation. Does not activate CHEK1 in response to DNA damage. May also act as a 'reader' of ubiquitinated PCNA: recruited to sites of UV damage and interacts with ubiquitinated PCNA and RAD18, the E3 ubiquitin ligase that monoubiquitinates PCNA. Facilitates chromatin association of RAD18 and is required for efficient PCNA monoubiquitination, promoting a feed-forward loop to enhance PCNA ubiquitination and translesion DNA synthesis. In Rattus norvegicus (Rat), this protein is DNA-dependent metalloprotease SPRTN.